The primary structure comprises 245 residues: tRNA1(Val) (adenine(37)-N6)-methyltransferase (245 aa).

It belongs to the methyltransferase superfamily. tRNA (adenine-N(6)-)-methyltransferase family.

The protein resides in the cytoplasm. The enzyme catalyses adenosine(37) in tRNA1(Val) + S-adenosyl-L-methionine = N(6)-methyladenosine(37) in tRNA1(Val) + S-adenosyl-L-homocysteine + H(+). Functionally, specifically methylates the adenine in position 37 of tRNA(1)(Val) (anticodon cmo5UAC). This is tRNA1(Val) (adenine(37)-N6)-methyltransferase from Escherichia coli O157:H7.